The primary structure comprises 308 residues: Malonate utilization transcriptional regulator (308 aa).

Residues 9–66 (ITFRKLSVFMMFMAKGNIARTAEAMKLSSVSVHRALHTLEEGVGCPLFVHKGRNLLPL) form the HTH lysR-type domain. A DNA-binding region (H-T-H motif) is located at residues 26-45 (IARTAEAMKLSSVSVHRALH).

Belongs to the LysR transcriptional regulatory family.

In terms of biological role, transcriptional regulator of the mau genes for malonate utilization. This chain is Malonate utilization transcriptional regulator (mauR), found in Klebsiella pneumoniae.